The sequence spans 261 residues: Arcelin-5A (261 aa).

An N-terminal signal peptide occupies residues 1-21 (MASSKLLSLALFLVLLTHANS). Asn43, Asn91, and Asn100 each carry an N-linked (GlcNAc...) asparagine glycan. Cys167 and Cys203 form a disulfide bridge. Residues 255 to 261 (ILLNNIL) constitute a propeptide that is removed on maturation.

This sequence belongs to the leguminous lectin family. Monomer. Post-translationally, the C-terminal segment appears to be highly susceptible to proteolysis.

In terms of biological role, seed storage. This carbohydrate-binding lectin has toxic effects on bean bruchid pests. The polypeptide is Arcelin-5A (ARC5A) (Phaseolus vulgaris (Kidney bean)).